Here is a 370-residue protein sequence, read N- to C-terminus: MSTSDKHNTPQMAAITLLGLLLVASTIEIAGAQSIGVCYGMLGNNLPNHWEVIQLYKSRNIGRLRLYDPNHGALQALKGSNIEVMLGLPNSDVKHIASGMEHARWWVQKNVKDFWPDVKIKYIAVGNEISPVTGTSYLTSFLTPAMVNIYKAIGEAGLGNNIKVSTSVDMTLIGNSYPPSQGSFRNDARWFTDPIVGFLRDTRAPLLVNIYPYFSYSGNPGQISLPYSLFTAPNVVVQDGSRQYRNLFDAMLDSVYAALERSGGASVGIVVSESGWPSAGAFGATYDNAATYLRNLIQHAKEGSPRKPGPIETYIFAMFDENNKNPELEKHFGLFSPNKQPKYNLNFGVSGGVWDSSVETNATASLISEM.

A signal peptide spans 1 to 32 (MSTSDKHNTPQMAAITLLGLLLVASTIEIAGA). Gln33 bears the Pyrrolidone carboxylic acid mark. The Proton donor role is filled by Glu128. The active-site Nucleophile is the Glu273. A propeptide spans 349 to 370 (VSGGVWDSSVETNATASLISEM) (removed in mature form). Residue Asn361 is glycosylated (N-linked (GlcNAc...) asparagine).

This sequence belongs to the glycosyl hydrolase 17 family. In terms of tissue distribution, is expressed primarily in epidermal cell of healthy plant, and following induction by ethylene, accumulates in mesophyll cells.

It is found in the vacuole. The catalysed reaction is Hydrolysis of (1-&gt;3)-beta-D-glucosidic linkages in (1-&gt;3)-beta-D-glucans.. In terms of biological role, implicated in the defense of plants against pathogens. This is Glucan endo-1,3-beta-glucosidase, basic vacuolar isoform GLB from Nicotiana tabacum (Common tobacco).